Reading from the N-terminus, the 175-residue chain is Respiratory supercomplex factor 1-B, mitochondrial (175 aa).

The 92-residue stretch at 3-94 (DQADVLADPD…TERKQRREFE (92 aa)) folds into the HIG1 domain. The next 2 membrane-spanning stretches (helical) occupy residues 30–46 (PLIP…LYRA) and 66–83 (IYAQ…GMYY). Residues 83 to 115 (YKTERKQRREFEKKVEERKAQEKRDAWLRELEA) adopt a coiled-coil conformation.

It belongs to the RCF1 family. In terms of assembly, associates with the respiratory chain complex III/complex IV supercomplex.

It is found in the mitochondrion membrane. Cytochrome c oxidase subunit which plays a role in assembly of respiratory supercomplexes. This chain is Respiratory supercomplex factor 1-B, mitochondrial (rcf1-B), found in Talaromyces marneffei (strain ATCC 18224 / CBS 334.59 / QM 7333) (Penicillium marneffei).